The following is a 196-amino-acid chain: ATP-dependent Clp protease proteolytic subunit (196 aa).

Ser101 functions as the Nucleophile in the catalytic mechanism. Residue His126 is part of the active site.

It belongs to the peptidase S14 family. As to quaternary structure, component of the chloroplastic Clp protease core complex.

It is found in the plastid. The protein resides in the chloroplast stroma. The enzyme catalyses Hydrolysis of proteins to small peptides in the presence of ATP and magnesium. alpha-casein is the usual test substrate. In the absence of ATP, only oligopeptides shorter than five residues are hydrolyzed (such as succinyl-Leu-Tyr-|-NHMec, and Leu-Tyr-Leu-|-Tyr-Trp, in which cleavage of the -Tyr-|-Leu- and -Tyr-|-Trp bonds also occurs).. Functionally, cleaves peptides in various proteins in a process that requires ATP hydrolysis. Has a chymotrypsin-like activity. Plays a major role in the degradation of misfolded proteins. This is ATP-dependent Clp protease proteolytic subunit from Lotus japonicus (Lotus corniculatus var. japonicus).